The sequence spans 180 residues: UPF0340 protein LL0489 (180 aa).

The protein belongs to the UPF0340 family.

This Lactococcus lactis subsp. lactis (strain IL1403) (Streptococcus lactis) protein is UPF0340 protein LL0489 (yeiF).